The chain runs to 338 residues: Lipoate-protein ligase A (338 aa).

In terms of domain architecture, BPL/LPL catalytic spans 29–216 (PATQRVLFLW…AFFAHYGERV (188 aa)). ATP is bound by residues arginine 71, 76–79 (GAVF), and lysine 134. Lysine 134 is a (R)-lipoate binding site.

This sequence belongs to the LplA family. As to quaternary structure, monomer.

It is found in the cytoplasm. It catalyses the reaction L-lysyl-[lipoyl-carrier protein] + (R)-lipoate + ATP = N(6)-[(R)-lipoyl]-L-lysyl-[lipoyl-carrier protein] + AMP + diphosphate + H(+). It participates in protein modification; protein lipoylation via exogenous pathway; protein N(6)-(lipoyl)lysine from lipoate: step 1/2. It functions in the pathway protein modification; protein lipoylation via exogenous pathway; protein N(6)-(lipoyl)lysine from lipoate: step 2/2. Functionally, catalyzes both the ATP-dependent activation of exogenously supplied lipoate to lipoyl-AMP and the transfer of the activated lipoyl onto the lipoyl domains of lipoate-dependent enzymes. The protein is Lipoate-protein ligase A of Salmonella arizonae (strain ATCC BAA-731 / CDC346-86 / RSK2980).